The following is a 494-amino-acid chain: Alpha-amylase-related protein (494 aa).

The first 20 residues, 1 to 20 (MFKFALALTLCLAGASLSLA), serve as a signal peptide directing secretion. Glutamine 21 bears the Pyrrolidone carboxylic acid mark. Cysteines 48 and 104 form a disulfide. 3 residues coordinate Ca(2+): asparagine 118, glutamine 169, and aspartate 178. Cysteines 157 and 171 form a disulfide. Chloride is bound at residue arginine 206. Aspartate 208 acts as the Nucleophile in catalysis. Histidine 212 provides a ligand contact to Ca(2+). The Proton donor role is filled by glutamate 245. Positions 308 and 343 each coordinate chloride. Cystine bridges form between cysteine 376-cysteine 382, cysteine 418-cysteine 441, and cysteine 448-cysteine 460.

This sequence belongs to the glycosyl hydrolase 13 family. As to quaternary structure, monomer. It depends on Ca(2+) as a cofactor. Chloride serves as cofactor.

It is found in the secreted. The enzyme catalyses Endohydrolysis of (1-&gt;4)-alpha-D-glucosidic linkages in polysaccharides containing three or more (1-&gt;4)-alpha-linked D-glucose units.. The polypeptide is Alpha-amylase-related protein (Amyrel) (Drosophila punjabiensis (Fruit fly)).